The following is a 127-amino-acid chain: Glycine cleavage system H protein (127 aa).

Positions 22–104 (EVVIGITHFA…YEGAWMVKVE (83 aa)) constitute a Lipoyl-binding domain. An N6-lipoyllysine modification is found at Lys63.

This sequence belongs to the GcvH family. As to quaternary structure, the glycine cleavage system is composed of four proteins: P, T, L and H. (R)-lipoate is required as a cofactor.

Its function is as follows. The glycine cleavage system catalyzes the degradation of glycine. The H protein shuttles the methylamine group of glycine from the P protein to the T protein. Is also involved in protein lipoylation via its role as an octanoyl/lipoyl carrier protein intermediate. This is Glycine cleavage system H protein from Bacillus cereus (strain G9842).